Here is a 58-residue protein sequence, read N- to C-terminus: Bowman-Birk type wound-induced trypsin inhibitor (58 aa).

Cystine bridges form between C4-C57, C5-C20, C8-C53, C10-C18, C27-C34, C31-C46, and C36-C44.

The protein belongs to the Bowman-Birk serine protease inhibitor family.

This chain is Bowman-Birk type wound-induced trypsin inhibitor, found in Medicago sativa (Alfalfa).